We begin with the raw amino-acid sequence, 384 residues long: S-adenosylmethionine synthase (384 aa).

His-15 contributes to the ATP binding site. Asp-17 lines the Mg(2+) pocket. Residue Glu-43 participates in K(+) binding. L-methionine-binding residues include Glu-56 and Gln-99. A flexible loop region spans residues 99 to 109 (QSPDINQGVDR). Residues 164–166 (DAK), 230–231 (RF), Asp-239, 245–246 (RK), Ala-262, and Lys-266 each bind ATP. Asp-239 contributes to the L-methionine binding site. Residue Lys-270 coordinates L-methionine.

Belongs to the AdoMet synthase family. As to quaternary structure, homotetramer; dimer of dimers. It depends on Mg(2+) as a cofactor. K(+) serves as cofactor.

The protein resides in the cytoplasm. It carries out the reaction L-methionine + ATP + H2O = S-adenosyl-L-methionine + phosphate + diphosphate. It participates in amino-acid biosynthesis; S-adenosyl-L-methionine biosynthesis; S-adenosyl-L-methionine from L-methionine: step 1/1. Catalyzes the formation of S-adenosylmethionine (AdoMet) from methionine and ATP. The overall synthetic reaction is composed of two sequential steps, AdoMet formation and the subsequent tripolyphosphate hydrolysis which occurs prior to release of AdoMet from the enzyme. This chain is S-adenosylmethionine synthase, found in Salmonella agona (strain SL483).